The chain runs to 117 residues: MAVNFYDVAYDLENALRGSEEFTRLKNLYDEVNADESAKRMFENFRDVQLRLQQKQMAGEEITQEEVTQAQKTVALVQQHEKISQLMEAEQRMSMLIGELNKIIMKPLEELYGSVEG.

Belongs to the UPF0342 family.

The sequence is that of UPF0342 protein YheA (yheA) from Bacillus subtilis (strain 168).